The chain runs to 424 residues: Interleukin-13 receptor subunit alpha-1 (424 aa).

Residues Met-1–Ala-25 form the signal peptide. The Extracellular segment spans residues Ala-26–Thr-340. One can recognise a Fibronectin type-III 1 domain in the interval Pro-32–Gly-121. Asn-35, Asn-59, Asn-103, and Asn-136 each carry an N-linked (GlcNAc...) asparagine glycan. A disulfide bond links Cys-44 and Cys-93. Intrachain disulfides connect Cys-132/Cys-142 and Cys-171/Cys-183. Residues Lys-224–Glu-336 enclose the Fibronectin type-III 2 domain. A glycan (N-linked (GlcNAc...) asparagine) is linked at Asn-262. The short motif at Trp-324 to Ser-328 is the WSXWS motif element. N-linked (GlcNAc...) asparagine glycosylation is present at Asn-338. The helical transmembrane segment at Phe-341–Leu-364 threads the bilayer. Residues Lys-365–Pro-424 are Cytoplasmic-facing. The Box 1 motif motif lies at Ile-371 to Gly-379.

The protein belongs to the type I cytokine receptor family. Type 5 subfamily. In terms of assembly, interleukin-13 receptor is a complex of IL4R, IL13RA1, and possibly other components. Interacts with TRAF3IP1. Interacts with IL4. As to expression, spleen, liver, thymus, heart, lung, kidney, testis, stomach, brain, skin, and colon; but not skeletal muscle.

The protein resides in the membrane. Its function is as follows. Binds with low affinity to interleukin-13 (IL13). Together with IL4RA can form a functional receptor for IL13. Also serves as an alternate accessory protein to the common cytokine receptor gamma chain for interleukin-4 (IL4) signaling, but cannot replace the function of IL2RG in allowing enhanced interleukin-2 (IL2) binding activity. The polypeptide is Interleukin-13 receptor subunit alpha-1 (Il13ra1) (Mus musculus (Mouse)).